The following is a 1332-amino-acid chain: SAGA complex subunit SPT7 (1332 aa).

Phosphothreonine; by ATM or ATR is present on threonine 78. Disordered stretches follow at residues 80–118 (EEEH…ISNE), 209–268 (VEEK…ISSS), and 331–384 (IEKG…PKQS). Phosphoserine is present on serine 88. The span at 106–118 (NNNTNTNTSISNE) shows a compositional bias: low complexity. Basic and acidic residues predominate over residues 217–233 (IGKNEKPQNKEGISKFA). Positions 234 to 249 (EDEDYDDEDENYDEDS) are enriched in acidic residues. The segment covering 250 to 260 (TDVKNVDDPPK) has biased composition (basic and acidic residues). A compositionally biased stretch (acidic residues) spans 345–360 (AATDEQDRENTNDEPD). Over residues 362–376 (NQKLPTPEGSTFSDT) the composition is skewed to polar residues. The region spanning 440–546 (IGQEELYEAC…KKSLQLIRMI (107 aa)) is the Bromo domain. A compositionally biased stretch (acidic residues) spans 566 to 578 (KDKDYELDEEEEV). 2 disordered regions span residues 566 to 724 (KDKD…YLLE) and 1286 to 1332 (GAEN…RLNQ). Basic and acidic residues-rich tracts occupy residues 593 to 634 (LAKE…KDKT) and 644 to 697 (NVNK…KEAG). Over residues 698-716 (ENNEEEEDDDDEDEDEDMV) the composition is skewed to acidic residues. Position 1293 is a phosphoserine (serine 1293). Polar residues predominate over residues 1316–1332 (NMGSNSSFSLSLPRLNQ).

Component of the 1.8 MDa SAGA (Spt-Ada-Gcn5 acetyltransferase) complex, which is composed of 19 subunits TRA1, SPT7, TAF5, NGG1/ADA3, SGF73, SPT20/ADA5, SPT8, TAF12, TAF6, HFI1/ADA1, UBP8, GCN5, ADA2, SPT3, SGF29, TAF10, TAF9, SGF11 and SUS1. The SAGA complex is composed of 4 modules, namely the HAT (histone acetyltransferase) module (GCN5, ADA2, NGG1/ADA3 and SGF29), the DUB (deubiquitinating) module (UBP8, SGF11, SGF73 and SUS1), the core or TAF (TBP-associated factor) module (TAF5, TAF6, TAF9, TAF10 and TAF12), and the Tra1 or SPT (Suppressor of Ty) module (TRA1, HFI1/ADA1, SPT3, SPT7, SPT8 and SPT20/ADA5). The Tra1/SPT module binds activators, the core module recruits TBP (TATA-binding protein), the HAT module contains the histone H3 acetyltransferase GCN5, and the DUB module comprises the histone H2B deubiquitinase UBP8. Also identified in an altered form of SAGA, named SALSA (SAGA altered, Spt8 absent) or SLIK (SAGA-like) complex, which contains a C-terminal truncated form of SPT7 and is missing SPT8. However, it has been shown that the SAGA and SAGA-like SALSA/SLIK transcriptional coactivators are structurally and biochemically equivalent. Identified in the Ada.spt complex with NGG1/ADA3 and TRA1. Post-translationally, protease PEP4 directly cleaves the C-terminus of SPT7(SAGA) to form SPT7(SLIK) within the SAGA complex in the nucleus.

Its subcellular location is the nucleus. Its function is as follows. Component of the transcription coactivator SAGA complex. SAGA acts as a general cofactor required for essentially all RNA polymerase II transcription. At the promoters, SAGA is required for transcription pre-initiation complex (PIC) recruitment. It influences RNA polymerase II transcriptional activity through different activities such as TBP interaction (via core/TAF module) and promoter selectivity, interaction with transcription activators (via Tra1/SPT module), and chromatin modification through histone acetylation (via HAT module) and deubiquitination (via DUB module). SAGA preferentially acetylates histones H3 (to form H3K9ac, H3K14ac, H3K18ac and H3K23ac) and H2B and deubiquitinates histone H2B. SAGA interacts with DNA via upstream activating sequences (UASs). Also identified in a modified version of SAGA named SALSA or SLIK. The cleavage of SPT7 and the absence of the SPT8 subunit in SLIK neither drive any major conformational differences in its structure compared with SAGA, nor significantly affect HAT, DUB, or DNA-binding activities. This Saccharomyces cerevisiae (strain ATCC 204508 / S288c) (Baker's yeast) protein is SAGA complex subunit SPT7 (SPT7).